We begin with the raw amino-acid sequence, 368 residues long: Quinolinate synthase (368 aa).

2 residues coordinate iminosuccinate: His-46 and Ser-63. Cys-110 lines the [4Fe-4S] cluster pocket. Residues 141–143 (YVN) and Ser-162 each bind iminosuccinate. Residue Cys-230 participates in [4Fe-4S] cluster binding. Iminosuccinate-binding positions include 256-258 (HPE) and Thr-273. Cys-320 lines the [4Fe-4S] cluster pocket.

The protein belongs to the quinolinate synthase family. Type 3 subfamily. Requires [4Fe-4S] cluster as cofactor.

The protein localises to the cytoplasm. The catalysed reaction is iminosuccinate + dihydroxyacetone phosphate = quinolinate + phosphate + 2 H2O + H(+). It functions in the pathway cofactor biosynthesis; NAD(+) biosynthesis; quinolinate from iminoaspartate: step 1/1. In terms of biological role, catalyzes the condensation of iminoaspartate with dihydroxyacetone phosphate to form quinolinate. The sequence is that of Quinolinate synthase from Bacillus cereus (strain Q1).